The following is a 644-amino-acid chain: 1-deoxy-D-xylulose-5-phosphate synthase (644 aa).

Thiamine diphosphate is bound by residues H78 and 120–122 (GHA). D149 contributes to the Mg(2+) binding site. Thiamine diphosphate contacts are provided by residues 150-151 (AA), N178, and E373. Mg(2+) is bound at residue N178.

Belongs to the transketolase family. DXPS subfamily. Homodimer. The cofactor is Mg(2+). It depends on thiamine diphosphate as a cofactor.

The catalysed reaction is D-glyceraldehyde 3-phosphate + pyruvate + H(+) = 1-deoxy-D-xylulose 5-phosphate + CO2. The protein operates within metabolic intermediate biosynthesis; 1-deoxy-D-xylulose 5-phosphate biosynthesis; 1-deoxy-D-xylulose 5-phosphate from D-glyceraldehyde 3-phosphate and pyruvate: step 1/1. In terms of biological role, catalyzes the acyloin condensation reaction between C atoms 2 and 3 of pyruvate and glyceraldehyde 3-phosphate to yield 1-deoxy-D-xylulose-5-phosphate (DXP). This is 1-deoxy-D-xylulose-5-phosphate synthase from Chlamydia felis (strain Fe/C-56) (Chlamydophila felis).